Reading from the N-terminus, the 349-residue chain is Hydroxymethylglutaryl-CoA synthase (349 aa).

Positions 29 and 30 each coordinate (3S)-3-hydroxy-3-methylglutaryl-CoA. Catalysis depends on Glu81, which acts as the Proton donor/acceptor. Cys113 and Thr154 together coordinate (3S)-3-hydroxy-3-methylglutaryl-CoA. Cys113 (acyl-thioester intermediate) is an active-site residue. Position 202 (Arg202) interacts with CoA. Residues Thr204 and His237 each coordinate (3S)-3-hydroxy-3-methylglutaryl-CoA. The active-site Proton donor/acceptor is the His237. Lys242 is a CoA binding site. 3 residues coordinate (3S)-3-hydroxy-3-methylglutaryl-CoA: Lys246, Asn269, and Ser299.

This sequence belongs to the thiolase-like superfamily. Archaeal HMG-CoA synthase family. Interacts with acetoacetyl-CoA thiolase that catalyzes the precedent step in the pathway and with a DUF35 protein. The acetoacetyl-CoA thiolase/HMG-CoA synthase complex channels the intermediate via a fused CoA-binding site, which allows for efficient coupling of the endergonic thiolase reaction with the exergonic HMGCS reaction.

It catalyses the reaction acetoacetyl-CoA + acetyl-CoA + H2O = (3S)-3-hydroxy-3-methylglutaryl-CoA + CoA + H(+). The protein operates within metabolic intermediate biosynthesis; (R)-mevalonate biosynthesis; (R)-mevalonate from acetyl-CoA: step 2/3. Functionally, catalyzes the condensation of acetyl-CoA with acetoacetyl-CoA to form 3-hydroxy-3-methylglutaryl-CoA (HMG-CoA). Functions in the mevalonate (MVA) pathway leading to isopentenyl diphosphate (IPP), a key precursor for the biosynthesis of isoprenoid compounds that are building blocks of archaeal membrane lipids. The polypeptide is Hydroxymethylglutaryl-CoA synthase (Methanosarcina acetivorans (strain ATCC 35395 / DSM 2834 / JCM 12185 / C2A)).